A 410-amino-acid chain; its full sequence is Elongation factor Tu, chloroplastic (410 aa).

The tr-type G domain maps to 10 to 213 (KPHLNIGTIG…TVDEYIPTPK (204 aa)). The G1 stretch occupies residues 19–26 (GHVDHGKT). A GTP-binding site is contributed by 19–26 (GHVDHGKT). T26 contacts Mg(2+). Residues 60 to 64 (GITIN) form a G2 region. The interval 81–84 (DCPG) is G3. GTP-binding positions include 81–85 (DCPGH) and 136–139 (NKAD). A G4 region spans residues 136–139 (NKAD). Positions 174-176 (SAI) are G5.

Belongs to the TRAFAC class translation factor GTPase superfamily. Classic translation factor GTPase family. EF-Tu/EF-1A subfamily.

Its subcellular location is the plastid. The protein resides in the chloroplast. The enzyme catalyses GTP + H2O = GDP + phosphate + H(+). Functionally, GTP hydrolase that promotes the GTP-dependent binding of aminoacyl-tRNA to the A-site of ribosomes during protein biosynthesis. This chain is Elongation factor Tu, chloroplastic (tufA), found in Codium fragile (Dead man's fingers).